Here is a 28-residue protein sequence, read N- to C-terminus: Cyclotide ltri-A (28 aa).

Residues 1 to 28 constitute a cross-link (cyclopeptide (Gly-Asn)); it reads GVACGESCVYLPCFTVGCTCTSSQCFKN. Cystine bridges form between Cys4-Cys18, Cys8-Cys20, and Cys13-Cys25.

Belongs to the cyclotide family. Bracelet subfamily. This is a cyclic peptide.

In terms of biological role, probably participates in a plant defense mechanism. In Leonia triandra, this protein is Cyclotide ltri-A.